Reading from the N-terminus, the 364-residue chain is DNA polymerase IV (364 aa).

Residues 14 to 198 (IIHIDMDAFF…LPIEKFHGVG (185 aa)) form the UmuC domain. Asp-18 and Asp-116 together coordinate Mg(2+). Glu-117 is a catalytic residue.

Belongs to the DNA polymerase type-Y family. As to quaternary structure, monomer. It depends on Mg(2+) as a cofactor.

It is found in the cytoplasm. The catalysed reaction is DNA(n) + a 2'-deoxyribonucleoside 5'-triphosphate = DNA(n+1) + diphosphate. Functionally, poorly processive, error-prone DNA polymerase involved in untargeted mutagenesis. Copies undamaged DNA at stalled replication forks, which arise in vivo from mismatched or misaligned primer ends. These misaligned primers can be extended by PolIV. Exhibits no 3'-5' exonuclease (proofreading) activity. May be involved in translesional synthesis, in conjunction with the beta clamp from PolIII. This Streptococcus pyogenes serotype M6 (strain ATCC BAA-946 / MGAS10394) protein is DNA polymerase IV.